Here is a 162-residue protein sequence, read N- to C-terminus: D-aminoacyl-tRNA deacylase (162 aa).

Residues 145–146 (GP) carry the Gly-cisPro motif, important for rejection of L-amino acids motif.

This sequence belongs to the DTD family. Homodimer.

It is found in the cytoplasm. It catalyses the reaction glycyl-tRNA(Ala) + H2O = tRNA(Ala) + glycine + H(+). It carries out the reaction a D-aminoacyl-tRNA + H2O = a tRNA + a D-alpha-amino acid + H(+). Its function is as follows. An aminoacyl-tRNA editing enzyme that deacylates mischarged D-aminoacyl-tRNAs. Also deacylates mischarged glycyl-tRNA(Ala), protecting cells against glycine mischarging by AlaRS. Acts via tRNA-based rather than protein-based catalysis; rejects L-amino acids rather than detecting D-amino acids in the active site. By recycling D-aminoacyl-tRNA to D-amino acids and free tRNA molecules, this enzyme counteracts the toxicity associated with the formation of D-aminoacyl-tRNA entities in vivo and helps enforce protein L-homochirality. In Bifidobacterium longum subsp. infantis (strain ATCC 15697 / DSM 20088 / JCM 1222 / NCTC 11817 / S12), this protein is D-aminoacyl-tRNA deacylase.